Here is a 291-residue protein sequence, read N- to C-terminus: Undecaprenyl-diphosphatase (291 aa).

The next 8 membrane-spanning stretches (helical) occupy residues 1 to 21 (MFII…LTEF), 48 to 68 (SAFT…AWVF), 102 to 122 (LHVL…DDFI), 126 to 146 (LFSV…MIIA), 162 to 182 (INYF…WPGF), 203 to 223 (SDFT…LSLL), 231 to 251 (IADI…GLIA), and 267 to 287 (FAIY…GFGI).

The protein belongs to the UppP family.

It is found in the cell membrane. It catalyses the reaction di-trans,octa-cis-undecaprenyl diphosphate + H2O = di-trans,octa-cis-undecaprenyl phosphate + phosphate + H(+). In terms of biological role, catalyzes the dephosphorylation of undecaprenyl diphosphate (UPP). Confers resistance to bacitracin. In Staphylococcus aureus (strain Mu3 / ATCC 700698), this protein is Undecaprenyl-diphosphatase.